The primary structure comprises 630 residues: DNA topoisomerase 4 subunit B (630 aa).

ATP-binding positions include Y5, N42, D69, 110 to 116, and K334; that span reads GLHGVGI. The region spanning 412-525 is the Toprim domain; the sequence is TELFLVEGDS…NGHVYVALPP (114 aa). The Mg(2+) site is built by E418, D490, and D492.

It belongs to the type II topoisomerase family. ParE type 1 subfamily. As to quaternary structure, heterotetramer composed of ParC and ParE. Requires Mg(2+) as cofactor. It depends on Mn(2+) as a cofactor. Ca(2+) is required as a cofactor.

It carries out the reaction ATP-dependent breakage, passage and rejoining of double-stranded DNA.. Topoisomerase IV is essential for chromosome segregation. It relaxes supercoiled DNA. Performs the decatenation events required during the replication of a circular DNA molecule. The chain is DNA topoisomerase 4 subunit B from Salmonella typhi.